The following is a 277-amino-acid chain: MIOREX complex component 2 (277 aa).

Belongs to the NAD(P)-dependent epimerase/dehydratase family. In terms of assembly, associates with the mitochondrial ribosome. Component of a multi-subunit COQ enzyme complex.

The protein localises to the mitochondrion. The protein operates within cofactor biosynthesis; ubiquinone biosynthesis. Functionally, component of MIOREX complexes, large expressome-like assemblies of ribosomes with factors involved in all the steps of post-transcriptional gene expression. Component of a multi-subunit COQ enzyme complex required for coenzyme Q biosynthesis. The polypeptide is MIOREX complex component 2 (Saccharomyces cerevisiae (strain ATCC 204508 / S288c) (Baker's yeast)).